Here is a 571-residue protein sequence, read N- to C-terminus: Sulfite reductase [NADPH] hemoprotein beta-component (571 aa).

Cysteine 435, cysteine 441, cysteine 480, and cysteine 484 together coordinate [4Fe-4S] cluster. Residue cysteine 484 participates in siroheme binding.

This sequence belongs to the nitrite and sulfite reductase 4Fe-4S domain family. Alpha(8)-beta(8). The alpha component is a flavoprotein, the beta component is a hemoprotein. The cofactor is siroheme. [4Fe-4S] cluster serves as cofactor.

It catalyses the reaction hydrogen sulfide + 3 NADP(+) + 3 H2O = sulfite + 3 NADPH + 4 H(+). Its pathway is sulfur metabolism; hydrogen sulfide biosynthesis; hydrogen sulfide from sulfite (NADPH route): step 1/1. In terms of biological role, component of the sulfite reductase complex that catalyzes the 6-electron reduction of sulfite to sulfide. This is one of several activities required for the biosynthesis of L-cysteine from sulfate. The sequence is that of Sulfite reductase [NADPH] hemoprotein beta-component from Serratia proteamaculans (strain 568).